A 415-amino-acid chain; its full sequence is Glutamate-1-semialdehyde 2,1-aminomutase (415 aa).

Position 260 is an N6-(pyridoxal phosphate)lysine (Lys260).

This sequence belongs to the class-III pyridoxal-phosphate-dependent aminotransferase family. HemL subfamily. Pyridoxal 5'-phosphate is required as a cofactor.

The protein localises to the cytoplasm. It catalyses the reaction (S)-4-amino-5-oxopentanoate = 5-aminolevulinate. Its pathway is porphyrin-containing compound metabolism; protoporphyrin-IX biosynthesis; 5-aminolevulinate from L-glutamyl-tRNA(Glu): step 2/2. The chain is Glutamate-1-semialdehyde 2,1-aminomutase from Methanoculleus marisnigri (strain ATCC 35101 / DSM 1498 / JR1).